Reading from the N-terminus, the 965-residue chain is 26S proteasome non-ATPase regulatory subunit 1 (965 aa).

8 PC repeats span residues 380–413 (NAVA…EGFG), 418–452 (GAML…EPVR), 454–488 (GACL…VSGE), 489–523 (SAGI…DKTQ), 560–595 (TGIC…DVKR), 630–664 (GAAM…FVRK), 665–706 (GALL…SLVK), and 708–738 (GAII…DMGS). Residues 836-856 (ASASSAAAAPSSSSTSGTAPA) show a composition bias toward low complexity. 2 disordered regions span residues 836–889 (ASAS…LQNP) and 943–965 (TPAS…INDF). Residues 863–882 (EVDQPGKSKKEKAPEKDTKP) show a composition bias toward basic and acidic residues.

It belongs to the proteasome subunit S1 family.

Acts as a regulatory subunit of the 26 proteasome which is involved in the ATP-dependent degradation of ubiquitinated proteins. This Caenorhabditis elegans protein is 26S proteasome non-ATPase regulatory subunit 1 (rpn-2).